Here is a 647-residue protein sequence, read N- to C-terminus: Threonine--tRNA ligase (647 aa).

The 61-residue stretch at 1 to 61 folds into the TGS domain; it reads MIKITFPDGA…EEDGSIEIVT (61 aa). The segment at 240–538 is catalytic; it reads DHRKLGKELD…LIETYKGAFP (299 aa). Residues cysteine 334, histidine 385, and histidine 515 each coordinate Zn(2+).

The protein belongs to the class-II aminoacyl-tRNA synthetase family. Homodimer. Zn(2+) is required as a cofactor.

It is found in the cytoplasm. It carries out the reaction tRNA(Thr) + L-threonine + ATP = L-threonyl-tRNA(Thr) + AMP + diphosphate + H(+). Catalyzes the attachment of threonine to tRNA(Thr) in a two-step reaction: L-threonine is first activated by ATP to form Thr-AMP and then transferred to the acceptor end of tRNA(Thr). Also edits incorrectly charged L-seryl-tRNA(Thr). This chain is Threonine--tRNA ligase, found in Streptococcus pyogenes serotype M6 (strain ATCC BAA-946 / MGAS10394).